The following is a 518-amino-acid chain: MAVALGCAIQASLNQGSVFQEYDTDCEVFRQRFRQFQYREAAGPHEAFNKLWELCCQWLKPKMRSKEQILELLVLEQFLTILPTEIETWVREHCPENRERVVSLIEDLQRELEIPEQQVDMHDMLLEELAPVGTAHIPPTMHLESPALQVMGPAQEAPVTEAWIPQAGPPELNYGATGECQNFLDPGYPLPKLDMNFSLENREEPWVKELQDSKEMKQLLDSKIGFEIGIENEEDTSKQKKMETMYPFIVTLEGNALQGPILQKDYVQLENQWETPPEDLQTDLAKLVDQQNPTLGETPENSNLEEPLNPKPHKKKSPGEKPHRCPQCGKCFARKSQLTGHQRIHSGEEPHKCPECGKRFLRSSDLYRHQRLHTGERPYECTVCKKRFTRRSHLIGHQRTHSEEETYKCLECGKSFCHGSSLKRHLKTHTGEKPHRCHNCGKSFSRLTALTLHQRTHTEERPFKCNYCGKSFRQRPSLVIHLRIHTGEKPYKCTHCSKSFRQRAGLIMHQVTHFRGLI.

The SCAN box domain occupies 30-112; the sequence is RQRFRQFQYR…SLIEDLQREL (83 aa). Residues 292–304 are compositionally biased toward polar residues; it reads NPTLGETPENSNL. A disordered region spans residues 292–325; that stretch reads NPTLGETPENSNLEEPLNPKPHKKKSPGEKPHRC. C2H2-type zinc fingers lie at residues 323 to 345, 351 to 373, 379 to 401, 407 to 429, 435 to 457, 463 to 485, and 491 to 513; these read HRCP…QRIH, HKCP…QRLH, YECT…QRTH, YKCL…LKTH, HRCH…QRTH, FKCN…LRIH, and YKCT…QVTH.

The protein belongs to the krueppel C2H2-type zinc-finger protein family.

The protein resides in the nucleus. Functionally, may be involved in transcriptional regulation. The polypeptide is Zinc finger protein 449 (ZNF449) (Gorilla gorilla gorilla (Western lowland gorilla)).